A 387-amino-acid chain; its full sequence is Patatin-12 (387 aa).

An N-terminal signal peptide occupies residues 1–23; sequence MATTKSFLILIVMILATTSSTFA. Positions 32-230 constitute a PNPLA domain; it reads LSIDGGGIKG…TVGDPALLSL (199 aa). The GXGXXG motif lies at 36–41; sequence GGGIKG. Residues 75-79 carry the GXSXG motif; it reads GTSTG. Residue Ser77 is the Nucleophile of the active site. The N-linked (GlcNAc...) asparagine glycan is linked to Asn115. Residue Asp216 is the Proton acceptor of the active site. The DGA/G signature appears at 216–218; sequence DGG. Residues 322-385 are a coiled coil; it reads ENALTGTTTE…DRKKLRANKA (64 aa).

It belongs to the patatin family. Tuber.

It is found in the vacuole. Functionally, probable lipolytic acyl hydrolase (LAH), an activity which is thought to be involved in the response of tubers to pathogens. This Solanum tuberosum (Potato) protein is Patatin-12.